A 159-amino-acid polypeptide reads, in one-letter code: Aspartate carbamoyltransferase regulatory chain (159 aa).

Positions 108, 113, 138, and 141 each coordinate Zn(2+).

The protein belongs to the PyrI family. As to quaternary structure, contains catalytic and regulatory chains. It depends on Zn(2+) as a cofactor.

Its function is as follows. Involved in allosteric regulation of aspartate carbamoyltransferase. The sequence is that of Aspartate carbamoyltransferase regulatory chain from Thermofilum pendens (strain DSM 2475 / Hrk 5).